A 143-amino-acid chain; its full sequence is Nucleoside diphosphate kinase (143 aa).

Residues Lys-11, Phe-59, Arg-87, Thr-93, Arg-104, and Asn-114 each coordinate ATP. His-117 acts as the Pros-phosphohistidine intermediate in catalysis.

It belongs to the NDK family. In terms of assembly, homotetramer. Requires Mg(2+) as cofactor.

It localises to the cytoplasm. The enzyme catalyses a 2'-deoxyribonucleoside 5'-diphosphate + ATP = a 2'-deoxyribonucleoside 5'-triphosphate + ADP. It carries out the reaction a ribonucleoside 5'-diphosphate + ATP = a ribonucleoside 5'-triphosphate + ADP. Functionally, major role in the synthesis of nucleoside triphosphates other than ATP. The ATP gamma phosphate is transferred to the NDP beta phosphate via a ping-pong mechanism, using a phosphorylated active-site intermediate. The protein is Nucleoside diphosphate kinase of Nitrosococcus oceani (strain ATCC 19707 / BCRC 17464 / JCM 30415 / NCIMB 11848 / C-107).